The primary structure comprises 1303 residues: D-lysergyl-peptide-synthetase subunit 2 (1303 aa).

The adenylation (A) domain stretch occupies residues 256-653 (EWCRWTPSAV…CRKSTQVKLR (398 aa)). One can recognise a Carrier domain in the interval 793 to 869 (APSNDIEEAF…ELARHTKLVA (77 aa)). S830 carries the post-translational modification O-(pantetheine 4'-phosphoryl)serine. Residues 905 to 1294 (EDVYPCTPLQ…HAAPRTLIGD (390 aa)) form a condensation (C) domain region.

Belongs to the NRP synthetase family.

Its pathway is alkaloid biosynthesis; ergot alkaloid biosynthesis. Its function is as follows. D-lysergyl-peptide-synthetase subunit 2; part of the gene cluster that mediates the biosynthesis of fungal ergot alkaloid. DmaW catalyzes the first step of ergot alkaloid biosynthesis by condensing dimethylallyl diphosphate (DMAP) and tryptophan to form 4-dimethylallyl-L-tryptophan. The second step is catalyzed by the methyltransferase easF that methylates 4-dimethylallyl-L-tryptophan in the presence of S-adenosyl-L-methionine, resulting in the formation of 4-dimethylallyl-L-abrine. The catalase easC and the FAD-dependent oxidoreductase easE then transform 4-dimethylallyl-L-abrine to chanoclavine-I which is further oxidized by easD in the presence of NAD(+), resulting in the formation of chanoclavine-I aldehyde. Agroclavine dehydrogenase easG then mediates the conversion of chanoclavine-I aldehyde to agroclavine via a non-enzymatic adduct reaction: the substrate is an iminium intermediate that is formed spontaneously from chanoclavine-I aldehyde in the presence of glutathione. The presence of easA is not required to complete this reaction. Further conversion of agroclavine to paspalic acid is a two-step process involving oxidation of agroclavine to elymoclavine and of elymoclavine to paspalic acid, the second step being performed by the elymoclavine oxidase cloA. Paspalic acid is then further converted to D-lysergic acid. Ergopeptines are assembled from D-lysergic acid and three different amino acids by the D-lysergyl-peptide-synthetases composed each of a monomudular and a trimodular nonribosomal peptide synthetase subunit. LpsB and lpsC encode the monomodular subunits responsible for D-lysergic acid activation and incorporation into the ergopeptine backbone. LpsA1 and A2 subunits encode the trimodular nonribosomal peptide synthetase assembling the tripeptide portion of ergopeptines. LpsA1 is responsible for formation of the major ergopeptine, ergotamine, and lpsA2 for alpha-ergocryptine, the minor ergopeptine of the total alkaloid mixture elaborated by C.purpurea. D-lysergyl-tripeptides are assembled by the nonribosomal peptide synthetases and released as N-(D-lysergyl-aminoacyl)-lactams. Cyclolization of the D-lysergyl-tripeptides is performed by the Fe(2+)/2-ketoglutarate-dependent dioxygenase easH which introduces a hydroxyl group into N-(D-lysergyl-aminoacyl)-lactam at alpha-C of the aminoacyl residue followed by spontaneous condensation with the terminal lactam carbonyl group. This chain is D-lysergyl-peptide-synthetase subunit 2, found in Claviceps purpurea (strain 20.1) (Ergot fungus).